We begin with the raw amino-acid sequence, 425 residues long: Serine--tRNA ligase (425 aa).

Positions 108 to 134 (YPNLPSEACPDGRSEDDNKEVRRWGDP) are disordered. The segment covering 117–134 (PDGRSEDDNKEVRRWGDP) has biased composition (basic and acidic residues). An L-serine-binding site is contributed by 233 to 235 (TAE). 264 to 266 (RRE) is a binding site for ATP. Residue Glu287 coordinates L-serine. Residue 351–354 (EISS) participates in ATP binding. Ser385 contributes to the L-serine binding site.

It belongs to the class-II aminoacyl-tRNA synthetase family. Type-1 seryl-tRNA synthetase subfamily. In terms of assembly, homodimer. The tRNA molecule binds across the dimer.

It localises to the cytoplasm. The catalysed reaction is tRNA(Ser) + L-serine + ATP = L-seryl-tRNA(Ser) + AMP + diphosphate + H(+). It carries out the reaction tRNA(Sec) + L-serine + ATP = L-seryl-tRNA(Sec) + AMP + diphosphate + H(+). Its pathway is aminoacyl-tRNA biosynthesis; selenocysteinyl-tRNA(Sec) biosynthesis; L-seryl-tRNA(Sec) from L-serine and tRNA(Sec): step 1/1. Catalyzes the attachment of serine to tRNA(Ser). Is also able to aminoacylate tRNA(Sec) with serine, to form the misacylated tRNA L-seryl-tRNA(Sec), which will be further converted into selenocysteinyl-tRNA(Sec). In Synechococcus sp. (strain CC9311), this protein is Serine--tRNA ligase.